A 223-amino-acid polypeptide reads, in one-letter code: Ethylene-inducing xylanase (223 aa).

Residues 1–19 (MVSFTTLLAGFVAVTGVLS) form the signal peptide. The 190-residue stretch at 34–223 (QTIGPGTGFN…SSGNANINVS (190 aa)) folds into the GH11 domain. A glycan (N-linked (GlcNAc...) asparagine) is linked at asparagine 94. Catalysis depends on glutamate 119, which acts as the Nucleophile. Residue glutamate 210 is the Proton donor of the active site.

This sequence belongs to the glycosyl hydrolase 11 (cellulase G) family. In terms of assembly, interactc with tomato LeEix2 receptor to trigger its internalization.

Its subcellular location is the secreted. It carries out the reaction Endohydrolysis of (1-&gt;4)-beta-D-xylosidic linkages in xylans.. It functions in the pathway glycan degradation; xylan degradation. Endo-1,4-beta-xylanase involved in the hydrolysis of xylan, a major structural heterogeneous polysaccharide found in plant biomass representing the second most abundant polysaccharide in the biosphere, after cellulose. Acts as an elicitor of plant defense responses in hosts such as tobacco (Nicotiana tabacum) or tomato (Solanum lycopersicum). Induces the production of ethylene and leads alterations in membrane function with rapid efflux of potassium, uptake of calcium, alkalization of the medium, increased leakage of cellular components and necrosis in plant hosts. EIX is translocated through the xylem of the host plant to the leaf mesophyll, leading to host response to pathogen-derived extracellular proteins in tissues distant from the invading pathogen. Greatly enhances the expression of two calcineurin B-like proteins-interacting protein kinases (CIPKs) family members, OsCIPK14 and OsCIPK15, in rice cultured cells. In tomato, triggers the defense response via binding to and subsequent internalization of the LeEix2 receptor. This is Ethylene-inducing xylanase from Hypocrea rufa (Trichoderma viride).